The primary structure comprises 62 residues: Photosystem II reaction center protein Z (62 aa).

The next 2 helical transmembrane spans lie at 8 to 28 (AVFA…VVFA) and 41 to 61 (FSGT…NSLI).

The protein belongs to the PsbZ family. In terms of assembly, PSII is composed of 1 copy each of membrane proteins PsbA, PsbB, PsbC, PsbD, PsbE, PsbF, PsbH, PsbI, PsbJ, PsbK, PsbL, PsbM, PsbT, PsbY, PsbZ, Psb30/Ycf12, at least 3 peripheral proteins of the oxygen-evolving complex and a large number of cofactors. It forms dimeric complexes.

The protein resides in the plastid. Its subcellular location is the chloroplast thylakoid membrane. In terms of biological role, may control the interaction of photosystem II (PSII) cores with the light-harvesting antenna, regulates electron flow through the 2 photosystem reaction centers. PSII is a light-driven water plastoquinone oxidoreductase, using light energy to abstract electrons from H(2)O, generating a proton gradient subsequently used for ATP formation. This Cucumis sativus (Cucumber) protein is Photosystem II reaction center protein Z.